A 595-amino-acid polypeptide reads, in one-letter code: O-phosphoseryl-tRNA(Sec) selenium transferase (595 aa).

Arg-75 provides a ligand contact to pyridoxal 5'-phosphate. Residues 96–106 (GRSGDLFSEQP) form a phosphate loop (P-loop) region. Residues Arg-97, Ser-98, and Gln-105 each contribute to the substrate site. Over residues 174 to 187 (RTVTKDSTSATSAA) the composition is skewed to polar residues. Disordered stretches follow at residues 174–208 (RTVT…TSLP) and 257–278 (STNR…TPTS). Residues 196–205 (EADRDRHDRT) show a composition bias toward basic and acidic residues. Arg-358 contacts tRNA. Lys-371 bears the N6-(pyridoxal phosphate)lysine mark. Arg-400 contributes to the substrate binding site.

Belongs to the SepSecS family. As to quaternary structure, homotetramer composed of two homodimers. Pyridoxal 5'-phosphate is required as a cofactor.

Its subcellular location is the cytoplasm. It catalyses the reaction O-phospho-L-seryl-tRNA(Sec) + selenophosphate + H2O = L-selenocysteinyl-tRNA(Sec) + 2 phosphate. It participates in aminoacyl-tRNA biosynthesis; selenocysteinyl-tRNA(Sec) biosynthesis; selenocysteinyl-tRNA(Sec) from L-seryl-tRNA(Sec) (archaeal/eukaryal route): step 2/2. Functionally, converts O-phosphoseryl-tRNA(Sec) to selenocysteinyl-tRNA(Sec) required for selenoprotein biosynthesis. The protein is O-phosphoseryl-tRNA(Sec) selenium transferase of Leishmania donovani.